Consider the following 492-residue polypeptide: Protein nucleotidyltransferase YdiU (492 aa).

Residues Gly101, Gly103, Arg104, Lys124, Asp136, Gly137, Arg187, and Arg194 each coordinate ATP. The active-site Proton acceptor is Asp268. Asn269 and Asp278 together coordinate Mg(2+). Asp278 is a binding site for ATP.

The protein belongs to the SELO family. It depends on Mg(2+) as a cofactor. The cofactor is Mn(2+).

The catalysed reaction is L-seryl-[protein] + ATP = 3-O-(5'-adenylyl)-L-seryl-[protein] + diphosphate. The enzyme catalyses L-threonyl-[protein] + ATP = 3-O-(5'-adenylyl)-L-threonyl-[protein] + diphosphate. It carries out the reaction L-tyrosyl-[protein] + ATP = O-(5'-adenylyl)-L-tyrosyl-[protein] + diphosphate. It catalyses the reaction L-histidyl-[protein] + UTP = N(tele)-(5'-uridylyl)-L-histidyl-[protein] + diphosphate. The catalysed reaction is L-seryl-[protein] + UTP = O-(5'-uridylyl)-L-seryl-[protein] + diphosphate. The enzyme catalyses L-tyrosyl-[protein] + UTP = O-(5'-uridylyl)-L-tyrosyl-[protein] + diphosphate. Functionally, nucleotidyltransferase involved in the post-translational modification of proteins. It can catalyze the addition of adenosine monophosphate (AMP) or uridine monophosphate (UMP) to a protein, resulting in modifications known as AMPylation and UMPylation. This chain is Protein nucleotidyltransferase YdiU, found in Corynebacterium efficiens (strain DSM 44549 / YS-314 / AJ 12310 / JCM 11189 / NBRC 100395).